The following is a 334-amino-acid chain: Glyceraldehyde-3-phosphate dehydrogenase (334 aa).

Residues 12-13 (RI), Asp-37, Arg-81, and Ser-123 contribute to the NAD(+) site. D-glyceraldehyde 3-phosphate is bound by residues 153 to 155 (SCT) and Thr-184. Cys-154 (nucleophile) is an active-site residue. Asn-185 contacts NAD(+). Residues Arg-199, 212 to 213 (TG), and Arg-235 each bind D-glyceraldehyde 3-phosphate. Asn-314 provides a ligand contact to NAD(+).

Belongs to the glyceraldehyde-3-phosphate dehydrogenase family. In terms of assembly, homotetramer.

It localises to the cytoplasm. The catalysed reaction is D-glyceraldehyde 3-phosphate + phosphate + NAD(+) = (2R)-3-phospho-glyceroyl phosphate + NADH + H(+). It functions in the pathway carbohydrate degradation; glycolysis; pyruvate from D-glyceraldehyde 3-phosphate: step 1/5. In terms of biological role, catalyzes the oxidative phosphorylation of glyceraldehyde 3-phosphate (G3P) to 1,3-bisphosphoglycerate (BPG) using the cofactor NAD. The first reaction step involves the formation of a hemiacetal intermediate between G3P and a cysteine residue, and this hemiacetal intermediate is then oxidized to a thioester, with concomitant reduction of NAD to NADH. The reduced NADH is then exchanged with the second NAD, and the thioester is attacked by a nucleophilic inorganic phosphate to produce BPG. This chain is Glyceraldehyde-3-phosphate dehydrogenase (gap), found in Pseudomonas aeruginosa (strain ATCC 15692 / DSM 22644 / CIP 104116 / JCM 14847 / LMG 12228 / 1C / PRS 101 / PAO1).